A 134-amino-acid polypeptide reads, in one-letter code: Spermadhesin-1 (134 aa).

The signal sequence occupies residues 1–20; sequence MKLSSVIPWALLLSTATVDS. 2 disulfide bridges follow: Cys-30–Cys-51 and Cys-74–Cys-95. Residues 30 to 131 form the CUB domain; sequence CGGILKEESG…SFYEVLYFQD (102 aa).

This sequence belongs to the spermadhesin family. As to expression, seminal vesicle tissue, ampulla and weakly in tissue of epididymis.

It is found in the secreted. Stimulates cell division and progesterone secretion of bovine granulosa cells in vitro in a potent and dose dependent manner. This protein appears to be a potent growth factor with effects on ovarian granulosa cells. This is Spermadhesin-1 (SPADH1) from Bos taurus (Bovine).